The primary structure comprises 313 residues: MPYSDKMAIESEAPKRCPECHSEHLIRDYEHGELICADCGAVIEDSFIDQGPEWRAFDSDQDERRARTGSPMTYLSHDKGLATEISWSNKDYYGKRIPHKNRAQIYRVRKWHQRIRVSNAAERNLSLALQLLNDIGAKLGIPKDIKETSALIYRKAVEKNLIRGRSIESIVCASIYAACRKVNIPRTLDEIAKASEVNKKKIGKAYRHLAKELDLNLRPTTPFSYIAQFCNKLDLDKQAIVISEDIVRQAMSMGISSGKGPTGIAAAAIYIASVKVGKPRTQKEIARISGVTEVTIRNRYKEISKALNISISE.

The TFIIB-type zinc finger occupies 13-44; the sequence is APKRCPECHSEHLIRDYEHGELICADCGAVIE. Zn(2+) contacts are provided by Cys-17, Cys-20, Cys-36, and Cys-39. 2 repeat units span residues 130–213 and 224–305.

The protein belongs to the TFIIB family.

Stabilizes TBP binding to an archaeal box-A promoter. Also responsible for recruiting RNA polymerase II to the pre-initiation complex (DNA-TBP-TFIIB). The polypeptide is Transcription initiation factor IIB 2 (Thermoplasma volcanium (strain ATCC 51530 / DSM 4299 / JCM 9571 / NBRC 15438 / GSS1)).